Reading from the N-terminus, the 115-residue chain is T cell receptor beta variable 18 (115 aa).

The first 21 residues, methionine 1 to alanine 21, serve as a signal peptide directing secretion. An Ig-like domain is found at glycine 22 to proline 115. A disulfide bridge links cysteine 42 with cysteine 111.

As to quaternary structure, alpha-beta TR is a heterodimer composed of an alpha and beta chain; disulfide-linked. The alpha-beta TR is associated with the transmembrane signaling CD3 coreceptor proteins to form the TR-CD3 (TcR or TCR). The assembly of alpha-beta TR heterodimers with CD3 occurs in the endoplasmic reticulum where a single alpha-beta TR heterodimer associates with one CD3D-CD3E heterodimer, one CD3G-CD3E heterodimer and one CD247 homodimer forming a stable octameric structure. CD3D-CD3E and CD3G-CD3E heterodimers preferentially associate with TR alpha and TR beta chains, respectively. The association of the CD247 homodimer is the last step of TcR assembly in the endoplasmic reticulum and is required for transport to the cell surface.

It localises to the cell membrane. In terms of biological role, v region of the variable domain of T cell receptor (TR) beta chain that participates in the antigen recognition. Alpha-beta T cell receptors are antigen specific receptors which are essential to the immune response and are present on the cell surface of T lymphocytes. Recognize peptide-major histocompatibility (MH) (pMH) complexes that are displayed by antigen presenting cells (APC), a prerequisite for efficient T cell adaptive immunity against pathogens. Binding of alpha-beta TR to pMH complex initiates TR-CD3 clustering on the cell surface and intracellular activation of LCK that phosphorylates the ITAM motifs of CD3G, CD3D, CD3E and CD247 enabling the recruitment of ZAP70. In turn ZAP70 phosphorylates LAT, which recruits numerous signaling molecules to form the LAT signalosome. The LAT signalosome propagates signal branching to three major signaling pathways, the calcium, the mitogen-activated protein kinase (MAPK) kinase and the nuclear factor NF-kappa-B (NF-kB) pathways, leading to the mobilization of transcription factors that are critical for gene expression and essential for T cell growth and differentiation. The T cell repertoire is generated in the thymus, by V-(D)-J rearrangement. This repertoire is then shaped by intrathymic selection events to generate a peripheral T cell pool of self-MH restricted, non-autoaggressive T cells. Post-thymic interaction of alpha-beta TR with the pMH complexes shapes TR structural and functional avidity. In Homo sapiens (Human), this protein is T cell receptor beta variable 18.